The primary structure comprises 356 residues: NF-kappa-B inhibitor beta (356 aa).

2 positions are modified to phosphoserine; by RPS6KA1: serine 19 and serine 23. ANK repeat units follow at residues 57–86 (DGDT…GTEY), 93–122 (LGQT…GLCV), and 126–155 (RGHT…RRPR). The disordered stretch occupies residues 149–193 (PRPRRPREAPDTYLAQGPDRTPDTNHTPVALYPDSDLEKEEEESE). Serine 183 carries the phosphoserine modification. Acidic residues predominate over residues 183 to 193 (SDLEKEEEESE). 3 ANK repeats span residues 206 to 235 (EGHT…DLDK), 240 to 269 (CGRS…NPAA), and 273 to 302 (GGRT…PEPE). A disordered region spans residues 298-356 (APEPEGEDEKSGPCSSSSDSDSGDEGDEYDDIVVHSSRSQTRLPPTPASKPLPDDPRPV). Serine 313 and serine 315 each carry phosphoserine; by CK2. Residues 318-328 (DSGDEGDEYDD) are compositionally biased toward acidic residues.

Belongs to the NF-kappa-B inhibitor family. As to quaternary structure, interacts with THRB (via ligand-binding domain). Interacts with RELA and REL. Interacts with COMMD1. Interacts with inhibitor kappa B-interacting Ras-like NKIRAS1 and NKIRAS2. Post-translationally, phosphorylated by RPS6KA1; followed by degradation. Interaction with NKIRAS1 and NKIRAS2 probably prevents phosphorylation. As to expression, expressed in all tissues examined.

It is found in the cytoplasm. It localises to the nucleus. Its function is as follows. Inhibits NF-kappa-B by complexing with and trapping it in the cytoplasm. However, the unphosphorylated form resynthesized after cell stimulation is able to bind NF-kappa-B allowing its transport to the nucleus and protecting it to further NFKBIA-dependent inactivation. Association with inhibitor kappa B-interacting NKIRAS1 and NKIRAS2 prevent its phosphorylation rendering it more resistant to degradation, explaining its slower degradation. The sequence is that of NF-kappa-B inhibitor beta (NFKBIB) from Homo sapiens (Human).